A 161-amino-acid polypeptide reads, in one-letter code: 6,7-dimethyl-8-ribityllumazine synthase (161 aa).

5-amino-6-(D-ribitylamino)uracil-binding positions include tryptophan 31, 63 to 65 (SFE), and 85 to 87 (VVI). Residue 90-91 (GT) participates in (2S)-2-hydroxy-3-oxobutyl phosphate binding. Histidine 93 serves as the catalytic Proton donor. Phenylalanine 118 contacts 5-amino-6-(D-ribitylamino)uracil. Arginine 132 contacts (2S)-2-hydroxy-3-oxobutyl phosphate.

Belongs to the DMRL synthase family.

The enzyme catalyses (2S)-2-hydroxy-3-oxobutyl phosphate + 5-amino-6-(D-ribitylamino)uracil = 6,7-dimethyl-8-(1-D-ribityl)lumazine + phosphate + 2 H2O + H(+). Its pathway is cofactor biosynthesis; riboflavin biosynthesis; riboflavin from 2-hydroxy-3-oxobutyl phosphate and 5-amino-6-(D-ribitylamino)uracil: step 1/2. Its function is as follows. Catalyzes the formation of 6,7-dimethyl-8-ribityllumazine by condensation of 5-amino-6-(D-ribitylamino)uracil with 3,4-dihydroxy-2-butanone 4-phosphate. This is the penultimate step in the biosynthesis of riboflavin. The polypeptide is 6,7-dimethyl-8-ribityllumazine synthase (Arthrobacter sp. (strain FB24)).